The chain runs to 227 residues: Esterase OVCA2 (227 aa).

Active-site charge relay system residues include serine 119, aspartate 179, and histidine 206.

Belongs to the LovG family.

The enzyme catalyses a carboxylic ester + H2O = an alcohol + a carboxylate + H(+). Exhibits ester hydrolase activity with a strong preference for long-chain alkyl ester substrates and high selectivity against a variety of short, branched, and substituted esters. Is able to hydrolyze ester bonds within a wide range of p-nitrophenyl derivatives (C2-C14) in vitro, with a strong preference toward substrates of &gt;8 carbons. This is Esterase OVCA2 (OVCA2) from Bos taurus (Bovine).